We begin with the raw amino-acid sequence, 182 residues long: ATP synthase subunit delta (182 aa).

Belongs to the ATPase delta chain family. F-type ATPases have 2 components, F(1) - the catalytic core - and F(0) - the membrane proton channel. F(1) has five subunits: alpha(3), beta(3), gamma(1), delta(1), epsilon(1). F(0) has three main subunits: a(1), b(2) and c(10-14). The alpha and beta chains form an alternating ring which encloses part of the gamma chain. F(1) is attached to F(0) by a central stalk formed by the gamma and epsilon chains, while a peripheral stalk is formed by the delta and b chains.

It is found in the cell inner membrane. Its function is as follows. F(1)F(0) ATP synthase produces ATP from ADP in the presence of a proton or sodium gradient. F-type ATPases consist of two structural domains, F(1) containing the extramembraneous catalytic core and F(0) containing the membrane proton channel, linked together by a central stalk and a peripheral stalk. During catalysis, ATP synthesis in the catalytic domain of F(1) is coupled via a rotary mechanism of the central stalk subunits to proton translocation. This protein is part of the stalk that links CF(0) to CF(1). It either transmits conformational changes from CF(0) to CF(1) or is implicated in proton conduction. The sequence is that of ATP synthase subunit delta from Sulfurihydrogenibium azorense (strain DSM 15241 / OCM 825 / Az-Fu1).